A 273-amino-acid polypeptide reads, in one-letter code: 4-hydroxy-tetrahydrodipicolinate reductase (273 aa).

NAD(+) contacts are provided by residues 12-17 (GAGGRM) and Glu38. Arg39 contacts NADP(+). NAD(+) is bound by residues 102–104 (GTT) and 126–129 (AANF). Catalysis depends on His159, which acts as the Proton donor/acceptor. His160 provides a ligand contact to (S)-2,3,4,5-tetrahydrodipicolinate. Residue Lys163 is the Proton donor of the active site. Residue 169–170 (GT) participates in (S)-2,3,4,5-tetrahydrodipicolinate binding.

This sequence belongs to the DapB family. Homotetramer.

The protein resides in the cytoplasm. It catalyses the reaction (S)-2,3,4,5-tetrahydrodipicolinate + NAD(+) + H2O = (2S,4S)-4-hydroxy-2,3,4,5-tetrahydrodipicolinate + NADH + H(+). The catalysed reaction is (S)-2,3,4,5-tetrahydrodipicolinate + NADP(+) + H2O = (2S,4S)-4-hydroxy-2,3,4,5-tetrahydrodipicolinate + NADPH + H(+). Its pathway is amino-acid biosynthesis; L-lysine biosynthesis via DAP pathway; (S)-tetrahydrodipicolinate from L-aspartate: step 4/4. Catalyzes the conversion of 4-hydroxy-tetrahydrodipicolinate (HTPA) to tetrahydrodipicolinate. The sequence is that of 4-hydroxy-tetrahydrodipicolinate reductase from Escherichia coli (strain K12 / MC4100 / BW2952).